A 294-amino-acid chain; its full sequence is NADH-cytochrome b5 reductase 1 (294 aa).

A helical transmembrane segment spans residues proline 13–phenylalanine 33. Residues valine 44–threonine 147 enclose the FAD-binding FR-type domain. FAD is bound by residues serine 127–glycine 142 and histidine 153–leucine 185.

It belongs to the flavoprotein pyridine nucleotide cytochrome reductase family. In terms of assembly, monomer. Component of the 2-(3-amino-3-carboxypropyl)histidine synthase complex composed of DPH1, DPH2, DPH3 and a NADH-dependent reductase, predominantly CBR1. FAD serves as cofactor.

It localises to the mitochondrion outer membrane. The enzyme catalyses 2 Fe(III)-[cytochrome b5] + NADH = 2 Fe(II)-[cytochrome b5] + NAD(+) + H(+). It catalyses the reaction 2 Fe(3+)-[Dph3] + NADH = 2 Fe(2+)-[Dph3] + NAD(+) + H(+). It functions in the pathway protein modification; peptidyl-diphthamide biosynthesis. NADH-dependent reductase for DPH3 and cytochrome b5. Required for the first step of diphthamide biosynthesis, a post-translational modification of histidine which occurs in elongation factor 2. DPH1 and DPH2 transfer a 3-amino-3-carboxypropyl (ACP) group from S-adenosyl-L-methionine (SAM) to a histidine residue, the reaction is assisted by a reduction system comprising DPH3 and a NADH-dependent reductase, predominantly CBR1. By reducing DPH3, also involved in the formation of the tRNA wobble base modification mcm5s 2U (5-methoxycarbonylmethyl-2-thiouridine), mediated by the elongator complex. The cytochrome b5/NADH cytochrome b5 reductase electron transfer system supports the catalytic activity of several sterol biosynthetic enzymes. This Cryptococcus neoformans var. neoformans serotype D (strain B-3501A) (Filobasidiella neoformans) protein is NADH-cytochrome b5 reductase 1 (CBR1).